Reading from the N-terminus, the 76-residue chain is Dermaseptin-SP2 (76 aa).

A signal peptide spans 1 to 22; sequence MAFLKKSLFLVLFLGLVSLSIC. A propeptide spanning residues 23 to 45 is cleaved from the precursor; the sequence is EEEKRENEDEEEQEDEEQSEEKR. The interval 24 to 44 is disordered; that stretch reads EEKRENEDEEEQEDEEQSEEK. A compositionally biased stretch (acidic residues) spans 30 to 41; that stretch reads EDEEEQEDEEQS. Position 73 is a glutamine amide (Gln-73). Positions 74 to 76 are excised as a propeptide; sequence GEQ.

In terms of tissue distribution, expressed by the skin glands.

It is found in the secreted. Its subcellular location is the target cell membrane. Its function is as follows. Antimicrobial peptide with activity against Gram-positive and Gram-negative bacteria and fungi. Has been tested against E.coli (MIC=2.68-8 uM), S.aureus (ATCC 25923, MIC=2.68-8 uM), S.aureus (ATCC oxacillin resistant, MIC=2.68 uM), K.pneumoniae (MIC=10.71 uM) and C.albicans (MIC=10.71-32 uM). Probably acts by disturbing membrane functions with its alpha-helical amphipathic structure. May penetrate bacterial membranes, but stay at the mammalian membrane surface. Shows a very weak hemolytic activity. This Agalychnis spurrelli (Gliding leaf frog) protein is Dermaseptin-SP2.